A 514-amino-acid chain; its full sequence is Ubiquitin carboxyl-terminal hydrolase 22 (514 aa).

The segment at 10–127 adopts a UBP-type zinc-finger fold; sequence PGCAHLGSFK…KEEQRKAWKM (118 aa). Cysteine 12, histidine 14, cysteine 52, cysteine 55, cysteine 65, cysteine 68, cysteine 73, histidine 78, histidine 82, histidine 88, cysteine 101, and cysteine 104 together coordinate Zn(2+). N6-acetyllysine is present on lysine 118. Threonine 136 carries the phosphothreonine modification. Positions 165 to 509 constitute a USP domain; the sequence is RGLINLGNTC…EGYLLFYHKQ (345 aa). Cysteine 174 (nucleophile) is an active-site residue. At serine 226 the chain carries Phosphoserine. The active-site Proton acceptor is histidine 468.

It belongs to the peptidase C19 family. UBP8 subfamily. As to quaternary structure, component of some SAGA transcription coactivator-HAT complexes, at least composed of ATXN7, ATXN7L3, ENY2, GCN5L2, SUPT3H, TAF10, TRRAP and USP22. Within the SAGA complex, ATXN7L3, ENY2 and USP22 form a subcomplex required for histone deubiquitination. Interacts directly with ATXN7L3; leading to its recruitment to the SAGA complex. Interacts with ATXN7L3 and weakly with ATXN7L3B. Interacts with MED1. In terms of processing, phosphorylated in G2/M phase, but not in G1 phase by CDK1. Post-translationally, ubiquitinated and subsequently degraded in a CDC20-dependent manner.

It localises to the nucleus. The protein resides in the cytoplasm. It catalyses the reaction Thiol-dependent hydrolysis of ester, thioester, amide, peptide and isopeptide bonds formed by the C-terminal Gly of ubiquitin (a 76-residue protein attached to proteins as an intracellular targeting signal).. Deubiquitinase that plays a role in several cellular processes including transcriptional regulation, cell cycle progression or innate immunity. As part of the transcription regulatory histone acetylation (HAT) complex SAGA, catalyzes the deubiquitination of both histones H2A and H2B, thereby acting as a transcriptional coactivator. Recruited to specific gene promoters by activators such as MYC, where it is required for transcription. Facilitates cell-cycle progression by stabilizing CCNB1 and antagonizing its proteasome-mediated degradation in a cell cycle-specific manner. Modulates cell cycle progression and apoptosis also by antagonizing TP53 transcriptional activation through deacetylase SIRT1 stabilization. Plays multiple roles in immunity and inflammation. Participates in antiviral response by deubiquitinating the importin KPNA2, leading to IRF3 nuclear translocation and subsequent type I interferon production. Acts as a central regulator of type III IFN signaling by negatively regulating STING1 activation and ubiquitination. Inhibits NLRP3 inflammasome activation by promoting NLRP3 degradation through ATG5-dependent autophagy. Deubiquitinates CD274 to induce its stabilization and thereby participates in maintenance of immune tolerance to self. Controls necroptotic cell death by regulating RIPK3 phosphorylation and ubiquitination. During bacterial infection, promotes pro-inflammatory response by targeting TRAF6 and removing its 'Lys-48'-linked polyubiquitination. The polypeptide is Ubiquitin carboxyl-terminal hydrolase 22 (USP22) (Bos taurus (Bovine)).